The chain runs to 320 residues: ATP-dependent 6-phosphofructokinase (320 aa).

Gly11 provides a ligand contact to ATP. 21–25 (RAVVR) is an ADP binding site. Residues 72–73 (RC) and 102–105 (GDGS) contribute to the ATP site. Residue Asp103 coordinates Mg(2+). 125–127 (TID) serves as a coordination point for substrate. Catalysis depends on Asp127, which acts as the Proton acceptor. Position 154 (Arg154) interacts with ADP. Substrate-binding positions include Arg162 and 169 to 171 (MGR). Residues 185–187 (GAE) and 214–216 (KTH) contribute to the ADP site. Substrate-binding positions include Glu223, Arg244, and 250-253 (HIQR).

Belongs to the phosphofructokinase type A (PFKA) family. ATP-dependent PFK group I subfamily. Prokaryotic clade 'B1' sub-subfamily. As to quaternary structure, homotetramer. Mg(2+) is required as a cofactor.

It localises to the cytoplasm. It catalyses the reaction beta-D-fructose 6-phosphate + ATP = beta-D-fructose 1,6-bisphosphate + ADP + H(+). It participates in carbohydrate degradation; glycolysis; D-glyceraldehyde 3-phosphate and glycerone phosphate from D-glucose: step 3/4. With respect to regulation, allosterically activated by ADP and other diphosphonucleosides, and allosterically inhibited by phosphoenolpyruvate. In terms of biological role, catalyzes the phosphorylation of D-fructose 6-phosphate to fructose 1,6-bisphosphate by ATP, the first committing step of glycolysis. This chain is ATP-dependent 6-phosphofructokinase, found in Clostridium botulinum (strain Alaska E43 / Type E3).